The following is a 75-amino-acid chain: uncharacterized protein (75 aa).

This is an uncharacterized protein from Orgyia pseudotsugata (Douglas-fir tussock moth).